Here is a 47-residue protein sequence, read N- to C-terminus: Ribosome-inactivating protein luffin P1 (47 aa).

Cystine bridges form between Cys12-Cys33 and Cys16-Cys29.

In terms of assembly, homotetramer.

It carries out the reaction Endohydrolysis of the N-glycosidic bond at one specific adenosine on the 28S rRNA.. Its function is as follows. Inhibits protein synthesis in animal cells. This Luffa aegyptiaca (Sponge gourd) protein is Ribosome-inactivating protein luffin P1.